The primary structure comprises 313 residues: Acetaldehyde dehydrogenase (313 aa).

12 to 15 contacts NAD(+); that stretch reads SGNI. Cys-132 functions as the Acyl-thioester intermediate in the catalytic mechanism. Residues 163-171 and Asn-291 each bind NAD(+); that span reads SAGPGTRAN.

The protein belongs to the acetaldehyde dehydrogenase family.

It carries out the reaction acetaldehyde + NAD(+) + CoA = acetyl-CoA + NADH + H(+). The polypeptide is Acetaldehyde dehydrogenase (bphG) (Burkholderia cepacia (Pseudomonas cepacia)).